The chain runs to 84 residues: Small ribosomal subunit protein uS17 (84 aa).

Belongs to the universal ribosomal protein uS17 family. In terms of assembly, part of the 30S ribosomal subunit.

One of the primary rRNA binding proteins, it binds specifically to the 5'-end of 16S ribosomal RNA. This chain is Small ribosomal subunit protein uS17, found in Alkaliphilus metalliredigens (strain QYMF).